A 343-amino-acid chain; its full sequence is Cytoplasmic tRNA 2-thiolation protein 1 (343 aa).

The protein belongs to the TtcA family. CTU1/NCS6/ATPBD3 subfamily.

It is found in the cytoplasm. It functions in the pathway tRNA modification; 5-methoxycarbonylmethyl-2-thiouridine-tRNA biosynthesis. Functionally, plays a central role in 2-thiolation of mcm(5)S(2)U at tRNA wobble positions of tRNA(Lys), tRNA(Glu) and tRNA(Gln). Directly binds tRNAs and probably acts by catalyzing adenylation of tRNAs, an intermediate required for 2-thiolation. It is unclear whether it acts as a sulfurtransferase that transfers sulfur from thiocarboxylated URM1 onto the uridine of tRNAs at wobble position. In Drosophila ananassae (Fruit fly), this protein is Cytoplasmic tRNA 2-thiolation protein 1.